We begin with the raw amino-acid sequence, 295 residues long: MPVKVHGVILMNIEEWEEYRYVEAGIKESITLIEDPGLKKMVEHVCHSGGKRIRPIILLLVSEICSGSYSRSLNAALAVEMMHSASLIHDDLLDQGLVRRNLPSAPEKFGPSGALLCGDYLIAKSIAFISPYGEKVIQDFGKAGMDMAEGEVLDLKLEDESFGENDYFKCIYKKTASLFAISASIGAYTGGAEEELAERFSHFGNALGTAYQIVDDILEFLEVVEGKESKFTSETLPHIYMKSTSKEEALKKSIDCVKLHVAAAKETLETFRECPARDKLFQITDYITVDMLENL.

The isopentenyl diphosphate site is built by Lys51, Arg54, and His83. The Mg(2+) site is built by Asp90 and Asp94. An all-trans-polyprenyl diphosphate is bound at residue Arg99. Arg100 serves as a coordination point for isopentenyl diphosphate. 3 residues coordinate an all-trans-polyprenyl diphosphate: Lys174, Thr175, and Gln212.

It belongs to the FPP/GGPP synthase family. Homodimer. Mg(2+) serves as cofactor.

The catalysed reaction is isopentenyl diphosphate + (2E,6E,10E)-geranylgeranyl diphosphate = (2E,6E,10E,14E)-geranylfarnesyl diphosphate + diphosphate. Involved in biosynthesis of the polyprenyl side-chain of methanophenazine, an electron carrier utilized for methanogenesis. Catalyzes the condensation of isopentenyl pyrophosphate with the allylic pyrophosphates to yield geranylfarnesyl diphosphate (GFPP). It prefers geranylgeranyl diphosphate (GGPP) and farnesyl diphosphate (FPP) as allylic substrate. This is Geranylfarnesyl diphosphate synthase from Methanosarcina mazei (strain ATCC BAA-159 / DSM 3647 / Goe1 / Go1 / JCM 11833 / OCM 88) (Methanosarcina frisia).